A 400-amino-acid chain; its full sequence is Probable vacuolar protease A (400 aa).

A signal peptide spans 1–18 (MKGSLLLAGATLLGCTSA). A propeptide spans 19–72 (KLHSLKLKKVSLKEQLEHADIDVQIKSLGQKYMGIRPEQHEQQMFKEQTPIEVE) (activation peptide). The region spanning 87 to 397 (YFSEISIGTP…DLGKGTVGLA (311 aa)) is the Peptidase A1 domain. Asp105 is an active-site residue. An intrachain disulfide couples Cys118 to Cys123. N-linked (GlcNAc...) asparagine glycosylation is present at Asn140. Asp289 is an active-site residue. A disulfide bridge connects residues Cys323 and Cys356. Asn340 carries N-linked (GlcNAc...) asparagine glycosylation.

This sequence belongs to the peptidase A1 family.

Its subcellular location is the vacuole lumen. The protein localises to the secreted. The enzyme catalyses Hydrolysis of proteins with broad specificity for peptide bonds. Cleaves -Leu-Leu-|-Val-Tyr- bond in a synthetic substrate. Does not act on esters of Tyr or Arg.. In terms of biological role, vacuolar aspartic endopeptidase which is probably also secreted and contributes to virulence. The polypeptide is Probable vacuolar protease A (PEP2) (Arthroderma benhamiae (strain ATCC MYA-4681 / CBS 112371) (Trichophyton mentagrophytes)).